Here is an 871-residue protein sequence, read N- to C-terminus: Dual O-methyltransferase/FAD-dependent monooxygenase CTB3 (871 aa).

The interval 1–429 is O-methyltransferase; the sequence is MMQFQRDLEA…GLLTVRSAGQ (429 aa). Position 279 (Asp279) interacts with S-adenosyl-L-methionine. The active-site Proton acceptor is His331. An FAD-dependent monooxygenase region spans residues 430-871; sequence TALSGTNTLT…NLVDCSEFVF (442 aa). Glu485, Arg569, and Ala806 together coordinate FAD.

In the C-terminal section; belongs to the paxM FAD-dependent monooxygenase family. This sequence in the N-terminal section; belongs to the class I-like SAM-binding methyltransferase superfamily. Cation-independent O-methyltransferase family. COMT subfamily.

The enzyme catalyses nor-toralactone + S-adenosyl-L-methionine = toralactone + S-adenosyl-L-homocysteine + H(+). It carries out the reaction toralactone + NADH + O2 + H(+) = 1-(3,4,5-trihydroxy-7-methoxynaphthalen-2-yl)propan-2-one + CO2 + NAD(+). The protein operates within mycotoxin biosynthesis. In terms of biological role, dual O-methyltransferase/FAD-dependent monooxygenase; part of the gene cluster that mediates the biosynthesis of cercosporin, a light-activated, non-host-selective toxin. The perylenequinone chromophore of cercosporin absorbs light energy to attain an electronically-activated triplet state and produces active oxygen species such as the hydroxyl radical, superoxide, hydrogen peroxide or singlet oxygen upon reaction with oxygen molecules. These reactive oxygen species cause damage to various cellular components including lipids, proteins and nucleic acids. The first step of cercosporin biosynthesis is performed by the polyketide synthase CTB1 which catalyzes the formation of nor-toralactone. The starter unit acyltransferase (SAT) domain of CTB1 initiates polyketide extension by the selective utilization of acetyl-CoA, which is elongated to the heptaketide in the beta-ketoacyl synthase (KS) domain by successive condensations with six malonyl units introduced by the malonyl acyltransferase (MAT) domain. The product template (PT) domain catalyzes C4-C9 and C2-C11 aldol cyclizations and dehydrations to a trihydroxynaphthalene, which is thought to be delivered to the thioesterase (TE) domain for product release. The bifunctional enzyme CTB3 then methylates nor-toralactone to toralactone before conducting an unusual oxidative aromatic ring opening. The O-methyltransferase CTB2 further methylates the nascent OH-6 of the CBT3 product, blocking further oxidation at this site before the reductase CTB6 reduces the 2-oxopropyl ketone at position C7, giving naphthalene. The FAD-dependent monooxygenase CTB5 in concert with the multicopper oxidase CTB12 are responsible for homodimerization of naphthalene with CTB7 installing the dioxepine moiety, finally producing cercosporin. The fasciclin domain-containing protein CTB11 might act with CTB5 and CTB12 whereas the roles of CTB9 and CTB10 have still to be elucidated. The protein is Dual O-methyltransferase/FAD-dependent monooxygenase CTB3 of Cercospora nicotianae (Barn spot disease fungus).